The chain runs to 800 residues: Internalin A (800 aa).

The signal sequence occupies residues 1–35; the sequence is MRKKRYVWLKSILVAILVFGSGVWINTSNGTNAQA. The LRRNT domain maps to 36-76; the sequence is ATITQDTPINQIFTDAALAEKMKTVLGKTNVTDTVSQTDLD. 15 LRR repeats span residues 77–98, 99–120, 121–142, 143–164, 165–186, 187–207, 208–229, 230–251, 252–273, 274–295, 296–317, 318–339, 340–361, 362–383, and 384–405; these read QVTT…EYLN, NLTQ…KDLT, KLVD…ANLT, NLTG…KNLT, NLNR…SGLT, NLQQ…ANLT, TLER…AKLT, NLES…GILT, NLDE…ASLT, NLTD…SGLT, KLTE…AGLT, ALTN…SNLK, NLTY…SSLT, KLQR…ANLT, and NINW…ANLT. One can recognise an LRRCT domain in the interval 416 to 505; the sequence is AWTNAPVNYK…AIFNAKFHVD (90 aa). One copy of the B-1 repeat lies at 518–587; that stretch reads LLTEPAKPVK…TTSQTVDYQG (70 aa). Positions 518–706 are 3 X approximate tandem repeats, type B; sequence LLTEPAKPVK…ITLYAQFTKN (189 aa). The stretch at 588 to 657 is one B-2 repeat; the sequence is LLQEPTPPTK…STTQAVDYQG (70 aa). Residues 658 to 706 form a B-3 repeat; that stretch reads LLKEPKAPTKAGYTFKGWYDEKTDGKKWDFATDKMPANDITLYAQFTKN. Residues 705–757 are disordered; that stretch reads KNPVAPPTTGGNTPPTTNNGGNTTPPSANIPGSDTSNTSTGNSASTTSTMNAY. Residues 711-753 show a composition bias toward low complexity; that stretch reads PTTGGNTPPTTNNGGNTTPPSANIPGSDTSNTSTGNSASTTST. An LPXTG sorting signal motif is present at residues 767 to 771; that stretch reads LPTTG. Thr770 carries the pentaglycyl murein peptidoglycan amidated threonine modification. The propeptide at 771–800 is removed by sortase A; sequence GDSDNALYLLLGLLAVGTAMALTKKARASK.

The protein belongs to the internalin family.

It is found in the secreted. The protein resides in the cell wall. Functionally, mediates the entry of Listeria monocytogenes into cells. Binds to host receptor cadherin-1 (E-cadherin, CDH1). The polypeptide is Internalin A (inlA) (Listeria monocytogenes serotype 1/2a (strain 10403S)).